A 101-amino-acid chain; its full sequence is NAD(P)H-quinone oxidoreductase subunit 4L, chloroplastic (101 aa).

3 consecutive transmembrane segments (helical) span residues 2-22, 32-52, and 61-81; these read MLEH…YGLI, MCLE…SDLF, and IFSI…PAIV.

This sequence belongs to the complex I subunit 4L family. In terms of assembly, NDH is composed of at least 16 different subunits, 5 of which are encoded in the nucleus.

The protein localises to the plastid. It localises to the chloroplast thylakoid membrane. The catalysed reaction is a plastoquinone + NADH + (n+1) H(+)(in) = a plastoquinol + NAD(+) + n H(+)(out). It carries out the reaction a plastoquinone + NADPH + (n+1) H(+)(in) = a plastoquinol + NADP(+) + n H(+)(out). In terms of biological role, NDH shuttles electrons from NAD(P)H:plastoquinone, via FMN and iron-sulfur (Fe-S) centers, to quinones in the photosynthetic chain and possibly in a chloroplast respiratory chain. The immediate electron acceptor for the enzyme in this species is believed to be plastoquinone. Couples the redox reaction to proton translocation, and thus conserves the redox energy in a proton gradient. The protein is NAD(P)H-quinone oxidoreductase subunit 4L, chloroplastic of Nymphaea alba (White water-lily).